A 105-amino-acid polypeptide reads, in one-letter code: Phosphoribosyl-AMP cyclohydrolase (105 aa).

Mg(2+) is bound at residue Asp-72. Cys-73 provides a ligand contact to Zn(2+). Residues Asp-74 and Asp-76 each contribute to the Mg(2+) site. Residues Cys-89 and Cys-96 each coordinate Zn(2+).

This sequence belongs to the PRA-CH family. In terms of assembly, homodimer. It depends on Mg(2+) as a cofactor. Requires Zn(2+) as cofactor.

It is found in the cytoplasm. It catalyses the reaction 1-(5-phospho-beta-D-ribosyl)-5'-AMP + H2O = 1-(5-phospho-beta-D-ribosyl)-5-[(5-phospho-beta-D-ribosylamino)methylideneamino]imidazole-4-carboxamide. Its pathway is amino-acid biosynthesis; L-histidine biosynthesis; L-histidine from 5-phospho-alpha-D-ribose 1-diphosphate: step 3/9. Catalyzes the hydrolysis of the adenine ring of phosphoribosyl-AMP. In Listeria monocytogenes serovar 1/2a (strain ATCC BAA-679 / EGD-e), this protein is Phosphoribosyl-AMP cyclohydrolase.